A 201-amino-acid polypeptide reads, in one-letter code: DNA polymerase epsilon subunit C (201 aa).

Disordered stretches follow at residues 102–165 (KKRE…KSTR) and 178–201 (SALD…STDP). A compositionally biased stretch (acidic residues) spans 117 to 144 (VVIEEPELHEDDGVEEEEEEDEVSEEEE). 2 stretches are compositionally biased toward basic and acidic residues: residues 145 to 164 (PVHN…DKST) and 182 to 201 (VGEH…STDP). A phosphoserine mark is found at S186, S188, and S189.

As to quaternary structure, DNA polymerase epsilon is a heterotetramer consisting of POL2, DPB2, DPB3 and DPB4.

The protein localises to the nucleus. In terms of biological role, as accessory component of the DNA polymerase epsilon (DNA polymerase II) participates in chromosomal DNA replication. It is required during synthesis of the leading and lagging DNA strands at the replication fork and binds at/or near replication origins and moves along DNA with the replication fork. It has 3'-5' proofreading exonuclease activity that correct errors arising during DNA replication. It is also involved in DNA synthesis during DNA repair. This Saccharomyces cerevisiae (strain ATCC 204508 / S288c) (Baker's yeast) protein is DNA polymerase epsilon subunit C (DPB3).